We begin with the raw amino-acid sequence, 104 residues long: PE-PGRS family protein PE_PGRS60 (104 aa).

Positions 1–60 (MSYVIAAPEALVAAATDLATLGSTIGAANAAAAGSTTALLTAGADEVSAAIAAYSECTAR) constitute a PE domain. The disordered stretch occupies residues 64–104 (HSVRGRRRSMSGSCRPWPQVGAPMRPPRPPASRRCRARSIC). Positions 94 to 104 (ASRRCRARSIC) are enriched in basic residues.

It belongs to the mycobacterial PE family. PGRS subfamily.

In terms of biological role, binds fibronectin. May contribute to pathogenicity. The chain is PE-PGRS family protein PE_PGRS60 from Mycobacterium tuberculosis (strain ATCC 25618 / H37Rv).